We begin with the raw amino-acid sequence, 272 residues long: Oligodendrocyte transcription factor 3 (272 aa).

Positions 1-14 (MNSDSSSVSSRASS) are enriched in low complexity. The tract at residues 1 to 71 (MNSDSSSVSS…KAAGESSKYK (71 aa)) is disordered. The span at 24–33 (DHHHRHHHHQ) shows a compositional bias: basic residues. The span at 36-46 (RLNSVSSTQGD) shows a compositional bias: polar residues. Positions 68–89 (SKYKIKKQLSEQDLQQLRLKIN) form a coiled coil. Residues 83–137 (QLRLKINGRERKRMHDLNLAMDGLREVMPYAHGPSVRKLSKIATLLLARNYILML) enclose the bHLH domain.

The protein resides in the nucleus. In terms of biological role, may determine the distinct specification program of class A neurons in the dorsal part of the spinal cord and suppress specification of class B neurons. The chain is Oligodendrocyte transcription factor 3 (OLIG3) from Homo sapiens (Human).